A 226-amino-acid chain; its full sequence is UPF0177 protein YbdJ (226 aa).

5 helical membrane passes run 16-36 (LLLLLVTVILYNGWTPHLGIF), 43-63 (FAFNYYGFVDILTFLVIIVIA), 81-101 (LLFILFFIVGGNIFIALAHHL), 169-189 (FAWVHTGFTYSFFLYLPISLV), and 206-226 (LHSSINLINTYLPNLLSFWVF).

Belongs to the UPF0177 family.

Its subcellular location is the cell membrane. The polypeptide is UPF0177 protein YbdJ (ybdJ) (Lactococcus lactis subsp. lactis (strain IL1403) (Streptococcus lactis)).